The sequence spans 347 residues: NADH-quinone oxidoreductase subunit H (347 aa).

Helical transmembrane passes span Leu13 to Ile33, Ala82 to Val102, Val115 to Gly135, Ile161 to Val181, Phe198 to Leu218, Ala258 to Val278, Val286 to Val306, and Leu321 to Leu341.

This sequence belongs to the complex I subunit 1 family. As to quaternary structure, NDH-1 is composed of 14 different subunits. Subunits NuoA, H, J, K, L, M, N constitute the membrane sector of the complex.

It is found in the cell inner membrane. The catalysed reaction is a quinone + NADH + 5 H(+)(in) = a quinol + NAD(+) + 4 H(+)(out). NDH-1 shuttles electrons from NADH, via FMN and iron-sulfur (Fe-S) centers, to quinones in the respiratory chain. The immediate electron acceptor for the enzyme in this species is believed to be ubiquinone. Couples the redox reaction to proton translocation (for every two electrons transferred, four hydrogen ions are translocated across the cytoplasmic membrane), and thus conserves the redox energy in a proton gradient. This subunit may bind ubiquinone. The sequence is that of NADH-quinone oxidoreductase subunit H from Rhizobium rhizogenes (strain K84 / ATCC BAA-868) (Agrobacterium radiobacter).